A 601-amino-acid polypeptide reads, in one-letter code: MAGNRGCKPRRFEGNQRMDIFKRLLKLARPHAPRFAVAMVCMLIAGALTSSLAFLVKPALDDIFLDRNAEMLKWIPLAIILIYLVKGGCSYFQAILMSFIGQRIVADLRNRLYEQIQKQSLSFFSKNPTGVLMSRITNDVNSIQGTVSDAVTSLMKDSFTLICLVFVIFYRDWQLAIIAMIVFPLTIYPIAKFGQKMRSVATRTQVTMGSLTTLLQETISGTRIVRAFCMEAHENQRFARENEKLMHLALKSVSINALSSPFMEFLGGIGIAAIIFYGGYQVIKGSSTPGTFFSFLTALIMLYEPVKRLTNVNNTIQQGIAGAQRVFSIIDLVPDIVDRDEAVELPRISEKIEIRNISFAYDDTPVLRNINLTIRAGEVVAFVGMSGGGKTTLVNLIPRFYDVTAGQILIDGHDIRDVSLISLRRQIGIVTQQTILFNDTVRNNIAYGSQGCSEKEIIEAARAANAHDFIVNLPEGYDTVIGELGTKLSGGERQRISIARALLKNAPILILDEATSSLDTEAEMEVQEALERLMKGRTTLVIAHRLSTIRNADRIVVLVKGEIVEEGAHETLLARRGEYYKLHQLQFKEDKVGEEVGRNDS.

A run of 6 helical transmembrane segments spans residues 35 to 55 (FAVA…LAFL), 77 to 97 (LAII…AILM), 150 to 170 (AVTS…VIFY), 173 to 193 (WQLA…IAKF), 263 to 283 (MEFL…YQVI), and 286 to 306 (SSTP…YEPV). Residues 36–318 (AVAMVCMLIA…LTNVNNTIQQ (283 aa)) enclose the ABC transmembrane type-1 domain. The ABC transporter domain occupies 352 to 585 (IEIRNISFAY…RGEYYKLHQL (234 aa)). 384 to 391 (GMSGGGKT) is a binding site for ATP.

It belongs to the ABC transporter superfamily. Lipid exporter (TC 3.A.1.106) family. As to quaternary structure, homodimer.

The protein localises to the cell inner membrane. The enzyme catalyses ATP + H2O + lipid A-core oligosaccharideSide 1 = ADP + phosphate + lipid A-core oligosaccharideSide 2.. Its function is as follows. Involved in lipopolysaccharide (LPS) biosynthesis. Translocates lipid A-core from the inner to the outer leaflet of the inner membrane. Transmembrane domains (TMD) form a pore in the inner membrane and the ATP-binding domain (NBD) is responsible for energy generation. This Syntrophus aciditrophicus (strain SB) protein is ATP-dependent lipid A-core flippase.